We begin with the raw amino-acid sequence, 601 residues long: DNA ligase (601 aa).

ATP is bound at residue Asp-258. Lys-260 acts as the N6-AMP-lysine intermediate in catalysis. ATP contacts are provided by Arg-265, Arg-280, Glu-310, Phe-350, Arg-427, and Lys-433.

This sequence belongs to the ATP-dependent DNA ligase family. The cofactor is Mg(2+). Requires Ca(2+) as cofactor. Mn(2+) serves as cofactor.

It carries out the reaction ATP + (deoxyribonucleotide)n-3'-hydroxyl + 5'-phospho-(deoxyribonucleotide)m = (deoxyribonucleotide)n+m + AMP + diphosphate.. Its function is as follows. DNA ligase that seals nicks in double-stranded DNA during DNA replication, DNA recombination and DNA repair. Also has low activity with dATP. Inactive with NAD(+), CTP, GTP, UTP, dCTP, dGTP or dTTP. This Saccharolobus shibatae (strain ATCC 51178 / DSM 5389 / JCM 8931 / NBRC 15437 / B12) (Sulfolobus shibatae) protein is DNA ligase.